Here is a 535-residue protein sequence, read N- to C-terminus: Dimethylaniline monooxygenase [N-oxide-forming] 2 (535 aa).

A2 bears the N-acetylalanine mark. Residues 9–13 (GAGVS), E32, 40–41 (VW), and 61–62 (NT) contribute to the FAD site. NADP(+)-binding positions include 60–61 (TN) and 195–198 (SGSD). Residue K492 forms a Glycyl lysine isopeptide (Lys-Gly) (interchain with G-Cter in SUMO) linkage. A helical membrane pass occupies residues 510–530 (FSVSFLLKILGLLAVVVAFFC).

Belongs to the FMO family. FAD is required as a cofactor. Requires Mg(2+) as cofactor.

It localises to the microsome membrane. It is found in the endoplasmic reticulum membrane. In terms of biological role, catalyzes the oxidative metabolism of numerous xenobiotics, including mainly therapeutic drugs and insecticides that contain a soft nucleophile, most commonly nitrogen and sulfur and participates to their bioactivation. The sequence is that of Dimethylaniline monooxygenase [N-oxide-forming] 2 from Pan troglodytes (Chimpanzee).